We begin with the raw amino-acid sequence, 68 residues long: DNA gyrase inhibitor YacG (68 aa).

Cysteine 14, cysteine 17, cysteine 29, and cysteine 33 together coordinate Zn(2+).

Belongs to the DNA gyrase inhibitor YacG family. Interacts with GyrB. Zn(2+) is required as a cofactor.

Inhibits all the catalytic activities of DNA gyrase by preventing its interaction with DNA. Acts by binding directly to the C-terminal domain of GyrB, which probably disrupts DNA binding by the gyrase. The protein is DNA gyrase inhibitor YacG of Azorhizobium caulinodans (strain ATCC 43989 / DSM 5975 / JCM 20966 / LMG 6465 / NBRC 14845 / NCIMB 13405 / ORS 571).